A 497-amino-acid chain; its full sequence is Probable malate:quinone oxidoreductase (497 aa).

The protein belongs to the MQO family. The cofactor is FAD.

It catalyses the reaction (S)-malate + a quinone = a quinol + oxaloacetate. It functions in the pathway carbohydrate metabolism; tricarboxylic acid cycle; oxaloacetate from (S)-malate (quinone route): step 1/1. In Exiguobacterium sibiricum (strain DSM 17290 / CCUG 55495 / CIP 109462 / JCM 13490 / 255-15), this protein is Probable malate:quinone oxidoreductase.